The sequence spans 471 residues: 6-phosphofructo-2-kinase/fructose-2,6-bisphosphatase 1 (471 aa).

Ser-2 is modified (N-acetylserine). Residues 2-250 (SREMGELTQT…AYYLMNIHVT (249 aa)) are 6-phosphofructo-2-kinase. Position 33 is a phosphoserine; by PKA (Ser-33). An ATP-binding site is contributed by 49–57 (GLPARGKTY). Beta-D-fructose 6-phosphate contacts are provided by Arg-82 and Arg-105. Asp-131 is an active-site residue. Positions 133 and 139 each coordinate beta-D-fructose 6-phosphate. Ser-141 carries the post-translational modification Phosphoserine. The active site involves Cys-161. ATP is bound at residue 170–175 (NIKQVK). Residues Lys-175, Arg-196, and Tyr-200 each contribute to the beta-D-fructose 6-phosphate site. The fructose-2,6-bisphosphatase stretch occupies residues 251–471 (PRSIYLCRHG…EALDTVPAHY (221 aa)). Arg-258 serves as a coordination point for beta-D-fructose 2,6-bisphosphate. His-259 functions as the Tele-phosphohistidine intermediate in the catalytic mechanism. The beta-D-fructose 2,6-bisphosphate site is built by Asn-265, Gly-271, and Arg-308. Glu-328 (proton donor/acceptor) is an active-site residue. Residues Tyr-339, Arg-353, Lys-357, Tyr-368, Gln-394, and Arg-398 each contribute to the beta-D-fructose 2,6-bisphosphate site. 350–353 (FALR) is an ATP binding site. ATP contacts are provided by residues 394–398 (QAVMR) and Tyr-430.

This sequence in the C-terminal section; belongs to the phosphoglycerate mutase family. As to quaternary structure, homodimer. As to expression, liver.

It catalyses the reaction beta-D-fructose 2,6-bisphosphate + H2O = beta-D-fructose 6-phosphate + phosphate. The catalysed reaction is beta-D-fructose 6-phosphate + ATP = beta-D-fructose 2,6-bisphosphate + ADP + H(+). Phosphorylation at Ser-33 inhibits the kinase and activates the bisphosphatase. Functionally, synthesis and degradation of fructose 2,6-bisphosphate. The chain is 6-phosphofructo-2-kinase/fructose-2,6-bisphosphatase 1 from Rattus norvegicus (Rat).